We begin with the raw amino-acid sequence, 237 residues long: Phosphoribosylaminoimidazole-succinocarboxamide synthase (237 aa).

Belongs to the SAICAR synthetase family.

The catalysed reaction is 5-amino-1-(5-phospho-D-ribosyl)imidazole-4-carboxylate + L-aspartate + ATP = (2S)-2-[5-amino-1-(5-phospho-beta-D-ribosyl)imidazole-4-carboxamido]succinate + ADP + phosphate + 2 H(+). It functions in the pathway purine metabolism; IMP biosynthesis via de novo pathway; 5-amino-1-(5-phospho-D-ribosyl)imidazole-4-carboxamide from 5-amino-1-(5-phospho-D-ribosyl)imidazole-4-carboxylate: step 1/2. The polypeptide is Phosphoribosylaminoimidazole-succinocarboxamide synthase (Listeria monocytogenes serotype 4b (strain CLIP80459)).